The following is a 412-amino-acid chain: UDP-galactose transporter homolog 1 (412 aa).

A helical transmembrane segment spans residues 3–23; it reads VLRLAVCISGVYAAFLLWAIA. Residues 31-51 form a disordered region; it reads FPSVHPHPHQQPHSPSDPPPG. Transmembrane regions (helical) follow at residues 58 to 78, 139 to 159, 197 to 217, and 222 to 242; these read LFLN…YLSF, LLAL…IGFL, YIVV…AETS, and GGSD…IDGL. Asn-244 is a glycosylation site (N-linked (GlcNAc...) asparagine). Helical transmembrane passes span 262–282, 325–345, 355–375, and 379–399; these read MMFT…VLPL, SALA…LFIF, TLVM…VVVF, and LTKG…VEAG.

Belongs to the nucleotide-sugar transporter family. SLC35B subfamily.

It is found in the endoplasmic reticulum membrane. Its function is as follows. May be involved in specific transport of UDP-Gal from the cytosol to the Golgi lumen. Involved in the maintenance of optimal conditions for the folding of secretory pathway proteins in the endoplasmic reticulum. The polypeptide is UDP-galactose transporter homolog 1 (HUT1-A) (Cryptococcus neoformans var. neoformans serotype D (strain JEC21 / ATCC MYA-565) (Filobasidiella neoformans)).